Consider the following 495-residue polypeptide: MNPSERFFSKLRKLTVYLETESSSLLHTSQNLKEDEEDEETGAQALYQLHSEVRALKRQVRDQVATHDTSSADLRSFIRRCLVLKQRTTEDIDSLKKHYEKYGYRPRISRLGSTEVNCTKEAEERAERDAEKLDAAEEDEETERGDCDKVDQSVTPEKMPPPVDQLQTPKLSDFGLSALQFQRVLGEAEVPLSAAPESAIALSSPPILMNLQPPQPKTPKCSLSMEEDALTPRLEDFGISEYTMCWNNDFTMDLFNKKPPKNRSERNENVLKPHNVFSNTSSVLNKDVANKSLESPEPPEFCTPGFKIAKNHVPSTPLFNGKNDLNSPPRLNNNCPSTPELPAFETPFVSKLIKKEDREEESKIHSESQENSLRLPDLSTTNGTSWNDAPEMPKMLRYEEEALPEMPILQSNFGSSLAFKNTSGESLSRMKTGAGHMLEMKQTSVPVPEDGFNQDWCLSTPKVRVKFPAEPCTPEMPDMSSVTQDILKLVAQCKY.

Over residues 119 to 135 (TKEAEERAERDAEKLDA) the composition is skewed to basic and acidic residues. Residues 119-165 (TKEAEERAERDAEKLDAAEEDEETERGDCDKVDQSVTPEKMPPPVDQ) are disordered. At serine 295 the chain carries Phosphoserine. Residues 355–368 (KEDREEESKIHSES) are compositionally biased toward basic and acidic residues. Residues 355 to 391 (KEDREEESKIHSESQENSLRLPDLSTTNGTSWNDAPE) are disordered. Positions 378-387 (LSTTNGTSWN) are enriched in polar residues.

Belongs to the SKA3 family. Component of the SKA complex, composed of ska1, ska2 and ska3.

It localises to the cytoplasm. The protein localises to the cytoskeleton. The protein resides in the spindle. Its subcellular location is the chromosome. It is found in the centromere. It localises to the kinetochore. Functionally, component of the SKA complex, a microtubule plus end-binding complex of the outer kinetochore that stabilizes spindle microtubule-kinetochore attachments, promotes alignment of chromosomes at the mitotic spindle equator (chromosome congression) and assists suppression of the spindle assembly checkpoint. Kinetochores, consisting of a centromere-associated inner segment and a microtubule-contacting outer segment, play a crucial role in chromosome segregation by mediating the physical connection between centromeric DNA and spindle microtubules. The outer kinetochore is made up of the ten-subunit KMN network complex, comprising the MIS12, NDC80 and KNL1 complexes, and auxiliary microtubule-associated components such as the SKA complex; together they connect the outer kinetochore with the inner kinetochore, bind microtubules, and mediate interactions with mitotic checkpoint proteins that delay anaphase until chromosomes are bioriented on the spindle. The SKA complex is loaded onto bioriented kinetochores and it facilitates chromosome congression by stabilizing microtubules, and end-on attachment of the NDC80 complex to depolymerizing spindle microtubules, thereby assisting the poleward-moving kinetochore in withstanding microtubule pulling forces. The complex associates with dynamic microtubule plus-ends and can track both depolymerizing and elongating microtubules. The complex recruits protein phosphatase 1 (PP1) to the kinetochore in prometaphase and metaphase, to oppose spindle assembly checkpoint signaling and promote the onset of anaphase. Within the complex, binds microtubules but with a much lower affinity than SKA1. During meiosis the SKA complex stabilizes the meiotic spindle and is required for its migration to the cortex. In Danio rerio (Zebrafish), this protein is SKA complex subunit 3 (ska3).